The primary structure comprises 597 residues: Elongation factor 4 (597 aa).

One can recognise a tr-type G domain in the interval 2 to 184; the sequence is QHIRNFSIIA…SIVARVPPPK (183 aa). GTP is bound by residues 14–19 and 131–134; these read DHGKST and NKMD.

The protein belongs to the TRAFAC class translation factor GTPase superfamily. Classic translation factor GTPase family. LepA subfamily.

The protein resides in the cell inner membrane. It catalyses the reaction GTP + H2O = GDP + phosphate + H(+). Functionally, required for accurate and efficient protein synthesis under certain stress conditions. May act as a fidelity factor of the translation reaction, by catalyzing a one-codon backward translocation of tRNAs on improperly translocated ribosomes. Back-translocation proceeds from a post-translocation (POST) complex to a pre-translocation (PRE) complex, thus giving elongation factor G a second chance to translocate the tRNAs correctly. Binds to ribosomes in a GTP-dependent manner. This chain is Elongation factor 4, found in Bordetella bronchiseptica (strain ATCC BAA-588 / NCTC 13252 / RB50) (Alcaligenes bronchisepticus).